A 2773-amino-acid chain; its full sequence is Peramine synthetase A (2773 aa).

The segment at 246–644 is adenylation 1; sequence FEDQVYSQPL…GRKDAQVKIR (399 aa). Positions 774-850 constitute a Carrier 1 domain; sequence QPTCEMEERM…DLAKNCSQTL (77 aa). O-(pantetheine 4'-phosphoryl)serine is present on Ser-811. A condensation region spans residues 888–1301; it reads QDAYPCTRLQ…MSSAEDLEQI (414 aa). The segment at 1321 to 1720 is adenylation 2; it reads ADQVQARPDS…GRKDTQVKVR (400 aa). The segment at 1810–1949 is methylation (Met) domain; that stretch reads IGRDFVGWSS…IIQHLASLGS (140 aa). The interval 2250 to 2271 is disordered; it reads MLSESLQQKAPPTARKRLPSTA. In terms of domain architecture, Carrier 2 spans 2267–2345; the sequence is LPSTAPERAM…HLLQTAAAGV (79 aa). An O-(pantetheine 4'-phosphoryl)serine modification is found at Ser-2304. Positions 2397–2715 are thiesterase (TE) domain; sequence TVVLTGANGF…LQDLADTARS (319 aa).

The protein belongs to the NRP synthetase family. Pantetheine 4'-phosphate is required as a cofactor.

It carries out the reaction (S)-1-pyrroline-5-carboxylate + L-arginine + S-adenosyl-L-methionine + 2 ATP = peramine + 2 AMP + S-adenosyl-L-homocysteine + 2 diphosphate + H2O + 2 H(+). In terms of biological role, nonribosomal peptide synthetase involved in the biosynthesis of peramine, a pyrrolopyrazine synthesized in association with the grass host that protects the plant from insect herbivory. The single multifunctional NRPS perA seems to be responsible for all catalytic steps in the biosynthesis of peramine. The condensation domain of perA is proposed to catalyze formation of a peptide bond between 1-pyrroline-5-carboxylate and arginine. The methylation domain of perA would catalyze the N-methylation of the alpha-amino group of arginine. The reductase domain is proposed to be responsible for reduction of the thioester and the cyclization to form an iminium ion resulting in release from the peptide synthetase. Deprotonation of this intermediate and oxidation of the pyrroline ring would give rise to peramine. This final oxidation to give the pyrrole functionality may be spontaneous. The polypeptide is Peramine synthetase A (Epichloe festucae (strain Fl1)).